A 294-amino-acid polypeptide reads, in one-letter code: ATP synthase gamma chain (294 aa).

The protein belongs to the ATPase gamma chain family. As to quaternary structure, F-type ATPases have 2 components, CF(1) - the catalytic core - and CF(0) - the membrane proton channel. CF(1) has five subunits: alpha(3), beta(3), gamma(1), delta(1), epsilon(1). CF(0) has three main subunits: a, b and c.

It localises to the cell inner membrane. Produces ATP from ADP in the presence of a proton gradient across the membrane. The gamma chain is believed to be important in regulating ATPase activity and the flow of protons through the CF(0) complex. The polypeptide is ATP synthase gamma chain (Campylobacter jejuni subsp. jejuni serotype O:6 (strain 81116 / NCTC 11828)).